A 249-amino-acid polypeptide reads, in one-letter code: Large ribosomal subunit protein uL1 (249 aa).

It belongs to the universal ribosomal protein uL1 family. As to quaternary structure, part of the 50S ribosomal subunit.

Functionally, binds directly to 23S rRNA. The L1 stalk is quite mobile in the ribosome, and is involved in E site tRNA release. Protein L1 is also a translational repressor protein, it controls the translation of the L11 operon by binding to its mRNA. The sequence is that of Large ribosomal subunit protein uL1 from Orientia tsutsugamushi (strain Ikeda) (Rickettsia tsutsugamushi).